A 226-amino-acid polypeptide reads, in one-letter code: Small ribosomal subunit protein uS3 (226 aa).

Positions 39–107 (VRKFLNKELR…PAQINISEVR (69 aa)) constitute a KH type-2 domain.

It belongs to the universal ribosomal protein uS3 family. As to quaternary structure, part of the 30S ribosomal subunit. Forms a tight complex with proteins S10 and S14.

Its function is as follows. Binds the lower part of the 30S subunit head. Binds mRNA in the 70S ribosome, positioning it for translation. The protein is Small ribosomal subunit protein uS3 of Idiomarina loihiensis (strain ATCC BAA-735 / DSM 15497 / L2-TR).